A 464-amino-acid chain; its full sequence is MGRAWGLLVGLLGVVWLLRLGHGEERRPETAAQRCFCQVSGYLDDCTCDVETIDKFNNYRLFPRLQKLLESDYFRYYKVNLKKPCPFWNDINQCGRRDCAVKPCHSDEVPDGIKSASYKYSEEANRIEECEQAERLGAVDESLSEETQKAVLQWTKHDDSSDSFCEIDDIQSPDAEYVDLLLNPERYTGYKGPDAWRIWSVIYEENCFKPQTIQRPLASGRGKSKENTFYNWLEGLCVEKRAFYRLISGLHASINVHLSARYLLQDTWLEKKWGHNVTEFQQRFDGILTEGEGPRRLRNLYFLYLIELRALSKVLPFFERPDFQLFTGNKVQDAENKALLLEILHEIKSFPLHFDENSFFAGDKNEAHKLKEDFRLHFRNISRIMDCVGCFKCRLWGKLQTQGLGTALKILFSEKLIANMPESGPSYEFQLTRQEIVSLFNAFGRISTSVRELENFRHLLQNVH.

Residues 1 to 23 (MGRAWGLLVGLLGVVWLLRLGHG) form the signal peptide. Disulfide bonds link Cys35/Cys48, Cys37/Cys46, Cys85/Cys387, Cys94/Cys99, Cys94/Cys130, Cys99/Cys104, Cys207/Cys237, and Cys390/Cys393. A phosphoserine mark is found at Ser106, Ser142, and Ser144. Residues Arg186, Thr188, and Trp199 each contribute to the FAD site. The FAD site is built by Ser248 and His251. Asn276 carries an N-linked (GlcNAc...) asparagine glycan. The FAD site is built by Arg283 and Arg296. The N-linked (GlcNAc...) asparagine glycan is linked to Asn380.

It belongs to the EROs family. Predominantly monomer. May function both as a monomer and a homodimer. Interacts with PDILT. Interacts with ERP44; the interaction results in retention of ERO1A in the endoplasmic reticulum. The cofactor is FAD. N-glycosylated. Post-translationally, the Cys-94/Cys-99 and Cys-390/Cys-393 disulfide bonds constitute the redox-active center. The Cys-94/Cys-99 disulfide bond may accept electron from P4HB and funnel them to the active site disulfide Cys-390/Cys-393. The regulatory Cys-99/Cys-104 disulfide bond stabilizes the other regulatory bond Cys-94/Cys-130. In terms of processing, phosphorylated on Ser-144 by FAM20C in the Golgi which increases its enzymatic activity. Phosphorylation is induced by lactation. It is also induced by hypoxia and reductive stress. As to expression, widely expressed (at protein level). In the mammary gland, expressed at higher levels in lactating mice than in virgin mice (at protein level).

The protein resides in the endoplasmic reticulum membrane. Its subcellular location is the golgi apparatus lumen. It is found in the secreted. The protein localises to the cell projection. It localises to the dendrite. Enzyme activity is tightly regulated to prevent the accumulation of reactive oxygen species in the endoplasmic reticulum. Reversibly down-regulated by the formation of disulfide bonds between the active site Cys-94 and Cys-130, and between Cys-99 and Cys-104. Glutathione may be required to regulate its activity in the endoplasmic reticulum. Its function is as follows. Oxidoreductase involved in disulfide bond formation in the endoplasmic reticulum. Efficiently reoxidizes P4HB/PDI, the enzyme catalyzing protein disulfide formation, in order to allow P4HB to sustain additional rounds of disulfide formation. Following P4HB reoxidation, passes its electrons to molecular oxygen via FAD, leading to the production of reactive oxygen species (ROS) in the cell. Required for the proper folding of immunoglobulins. Plays an important role in ER stress-induced, CHOP-dependent apoptosis by activating the inositol 1,4,5-trisphosphate receptor IP3R1. The protein is ERO1-like protein alpha of Mus musculus (Mouse).